A 250-amino-acid polypeptide reads, in one-letter code: Uracil-DNA glycosylase (250 aa).

Asp-91 (proton acceptor) is an active-site residue.

It belongs to the uracil-DNA glycosylase (UDG) superfamily. UNG family.

The protein resides in the host nucleus. It catalyses the reaction Hydrolyzes single-stranded DNA or mismatched double-stranded DNA and polynucleotides, releasing free uracil.. Excises uracil residues from the DNA which can arise as a result of misincorporation of dUMP residues by DNA polymerase or due to deamination of cytosine. Its function is as follows. Excises uracil residues from the DNA which can arise as a result of misincorporation of dUMP residues by DNA polymerase or deamination of cytosines. Therefore may reduce deleterious uracil incorporation into the viral genome, particularly in terminally differentiated cells which lack DNA repair enzymes. This Homo sapiens (Human) protein is Uracil-DNA glycosylase (UL114).